Reading from the N-terminus, the 106-residue chain is uncharacterized protein (106 aa).

This is an uncharacterized protein from Thermoproteus tenax virus 1 (strain KRA1) (TTV1).